A 256-amino-acid polypeptide reads, in one-letter code: Ubiquinone/menaquinone biosynthesis C-methyltransferase UbiE (256 aa).

Residues Thr-79, Asp-100, and 128–129 contribute to the S-adenosyl-L-methionine site; that span reads DA.

The protein belongs to the class I-like SAM-binding methyltransferase superfamily. MenG/UbiE family.

The catalysed reaction is a 2-demethylmenaquinol + S-adenosyl-L-methionine = a menaquinol + S-adenosyl-L-homocysteine + H(+). It carries out the reaction a 2-methoxy-6-(all-trans-polyprenyl)benzene-1,4-diol + S-adenosyl-L-methionine = a 5-methoxy-2-methyl-3-(all-trans-polyprenyl)benzene-1,4-diol + S-adenosyl-L-homocysteine + H(+). It participates in quinol/quinone metabolism; menaquinone biosynthesis; menaquinol from 1,4-dihydroxy-2-naphthoate: step 2/2. The protein operates within cofactor biosynthesis; ubiquinone biosynthesis. Functionally, methyltransferase required for the conversion of demethylmenaquinol (DMKH2) to menaquinol (MKH2) and the conversion of 2-polyprenyl-6-methoxy-1,4-benzoquinol (DDMQH2) to 2-polyprenyl-3-methyl-6-methoxy-1,4-benzoquinol (DMQH2). This Stutzerimonas stutzeri (strain A1501) (Pseudomonas stutzeri) protein is Ubiquinone/menaquinone biosynthesis C-methyltransferase UbiE.